Reading from the N-terminus, the 310-residue chain is Probable manganese-dependent inorganic pyrophosphatase (310 aa).

The Mn(2+) site is built by histidine 9, aspartate 13, aspartate 15, aspartate 76, histidine 98, and aspartate 150.

It belongs to the PPase class C family. Mn(2+) is required as a cofactor.

Its subcellular location is the cytoplasm. The catalysed reaction is diphosphate + H2O = 2 phosphate + H(+). The sequence is that of Probable manganese-dependent inorganic pyrophosphatase from Streptococcus thermophilus (strain ATCC BAA-491 / LMD-9).